A 202-amino-acid chain; its full sequence is MKKIGVFGGTFDPIHIGHIYIAYEAYKILELDEVIFMPAGNPPHKKWKDITDEIIRYEMVKKAIEPYSFFSINNYEIEKKGLSFTYETLRYLHESFKEVELYFITGADCLVNLNSWKNINEIFKFSNLVVFNRPGFDKNDLLKRKEEFDREYCTNIVYLDLLNIEISSTLIRERVRESLEVKFFLPPGVVDIIDKYNLYRRE.

This sequence belongs to the NadD family.

The catalysed reaction is nicotinate beta-D-ribonucleotide + ATP + H(+) = deamido-NAD(+) + diphosphate. It functions in the pathway cofactor biosynthesis; NAD(+) biosynthesis; deamido-NAD(+) from nicotinate D-ribonucleotide: step 1/1. Catalyzes the reversible adenylation of nicotinate mononucleotide (NaMN) to nicotinic acid adenine dinucleotide (NaAD). The protein is Probable nicotinate-nucleotide adenylyltransferase of Clostridium perfringens (strain 13 / Type A).